A 208-amino-acid polypeptide reads, in one-letter code: Proteasome subunit beta 2 (208 aa).

Positions 1–14 (MGNELQLENKILKG) are cleaved as a propeptide — removed in mature form; by autocatalysis. Threonine 15 acts as the Nucleophile in catalysis.

This sequence belongs to the peptidase T1B family. In terms of assembly, the 20S proteasome core is composed of 14 alpha and 14 beta subunits that assemble into four stacked heptameric rings, resulting in a barrel-shaped structure. The two inner rings, each composed of seven catalytic beta subunits, are sandwiched by two outer rings, each composed of seven alpha subunits. The catalytic chamber with the active sites is on the inside of the barrel. Has a gated structure, the ends of the cylinder being occluded by the N-termini of the alpha-subunits. Is capped at one or both ends by the proteasome regulatory ATPase, PAN.

The protein resides in the cytoplasm. The enzyme catalyses Cleavage of peptide bonds with very broad specificity.. With respect to regulation, the formation of the proteasomal ATPase PAN-20S proteasome complex, via the docking of the C-termini of PAN into the intersubunit pockets in the alpha-rings, triggers opening of the gate for substrate entry. Interconversion between the open-gate and close-gate conformations leads to a dynamic regulation of the 20S proteasome proteolysis activity. In terms of biological role, component of the proteasome core, a large protease complex with broad specificity involved in protein degradation. This Saccharolobus solfataricus (strain ATCC 35092 / DSM 1617 / JCM 11322 / P2) (Sulfolobus solfataricus) protein is Proteasome subunit beta 2.